A 142-amino-acid chain; its full sequence is Large ribosomal subunit protein uL13 (142 aa).

The protein belongs to the universal ribosomal protein uL13 family. In terms of assembly, part of the 50S ribosomal subunit.

Functionally, this protein is one of the early assembly proteins of the 50S ribosomal subunit, although it is not seen to bind rRNA by itself. It is important during the early stages of 50S assembly. The chain is Large ribosomal subunit protein uL13 from Acholeplasma laidlawii (strain PG-8A).